The following is a 202-amino-acid chain: Na(+)-translocating NADH-quinone reductase subunit E (202 aa).

The next 6 membrane-spanning stretches (helical) occupy residues 11–31, 35–55, 79–99, 114–134, 144–164, and 180–200; these read AVFI…FIAI, VETA…TVPA, LSFL…QILE, GVFL…LFMV, VVYG…LAGI, and LGIT…FSGV.

The protein belongs to the NqrDE/RnfAE family. In terms of assembly, composed of six subunits; NqrA, NqrB, NqrC, NqrD, NqrE and NqrF.

It is found in the cell inner membrane. It catalyses the reaction a ubiquinone + n Na(+)(in) + NADH + H(+) = a ubiquinol + n Na(+)(out) + NAD(+). Functionally, NQR complex catalyzes the reduction of ubiquinone-1 to ubiquinol by two successive reactions, coupled with the transport of Na(+) ions from the cytoplasm to the periplasm. NqrA to NqrE are probably involved in the second step, the conversion of ubisemiquinone to ubiquinol. This chain is Na(+)-translocating NADH-quinone reductase subunit E, found in Stutzerimonas stutzeri (strain A1501) (Pseudomonas stutzeri).